Here is a 79-residue protein sequence, read N- to C-terminus: UPF0180 protein BCB4264_A1446 (79 aa).

It belongs to the UPF0180 family.

This chain is UPF0180 protein BCB4264_A1446, found in Bacillus cereus (strain B4264).